Reading from the N-terminus, the 217-residue chain is MSSLLISYESDFKTTLEQAKASLAEAPSQPLSQRNTTLKHVEQQQDELFDLLDQMDVEVNNSIGDASERATYKAKLREWKKTIQSDIKRPLQSLVDSGDRDRLFGDLNASNIDDDQRQQLLSNHAILQKSGDRLKDASRIANETEGIGSQIMMDLRSQRETLENARQTLFQADSYVDKSIKTLKTMTRRLVANKFISYAIIAVLILLILLVLFSKFK.

Residue serine 2 is modified to N-acetylserine. At 2-194 the chain is on the cytoplasmic side; that stretch reads SSLLISYESD…TMTRRLVANK (193 aa). Residues serine 110 and serine 149 each carry the phosphoserine modification. Residues 124 to 186 form the t-SNARE coiled-coil homology domain; the sequence is HAILQKSGDR…DKSIKTLKTM (63 aa). A helical; Anchor for type IV membrane protein transmembrane segment spans residues 195-215; the sequence is FISYAIIAVLILLILLVLFSK. Residues 216–217 lie on the Vesicular side of the membrane; the sequence is FK.

Belongs to the VTI1 family. Forms SNARE complexes with the t-SNAREs VAM3 and VAM7, and the v-SNAREs NYV1 and YKT6 on vacuolar membranes, which are involved in biosynthetic transport pathways to the vacuole and in homotypic vacuole fusion. Forms SNARE complexes with the cis-Golgi t-SNARE SED5 and the v-SNAREs SFT1 and YTK6, which are involved in retrograde traffic to the cis-Golgi compartment. Forms SNARE complexes with the t-SNAREs TLG1 and TLG2, and either the v-SNARE SNC1 or SNC2, which are involved in traffic from early endosomes to the trans-Golgi network (TGN). Forms SNARE complexes with the t-SNAREs PEP12 and either SYN8 or TLG1, and the v-SNARE SNC1, which are involved in traffic from the TGN to the prevacuolar compartment (PVC).

It localises to the prevacuolar compartment membrane. The protein resides in the golgi apparatus membrane. Functionally, t-SNARE found in various SNARE complexes involved in multiple transport pathways. The composition of the t-SNARE complexes is specific for a limited number of v-SNAREs and therefore allows only the vesicles carrying the matching v-SNARE to fuse. This is t-SNARE VTI1 (VTI1) from Saccharomyces cerevisiae (strain ATCC 204508 / S288c) (Baker's yeast).